Here is a 213-residue protein sequence, read N- to C-terminus: N-(5'-phosphoribosyl)anthranilate isomerase (213 aa).

The protein belongs to the TrpF family.

It catalyses the reaction N-(5-phospho-beta-D-ribosyl)anthranilate = 1-(2-carboxyphenylamino)-1-deoxy-D-ribulose 5-phosphate. Its pathway is amino-acid biosynthesis; L-tryptophan biosynthesis; L-tryptophan from chorismate: step 3/5. This Caulobacter sp. (strain K31) protein is N-(5'-phosphoribosyl)anthranilate isomerase.